Consider the following 155-residue polypeptide: Large ribosomal subunit protein eL24 (155 aa).

The interval 119–155 (VKAAKKAAAPAPAKKSAPKQKAAKVTQKAAPRVGGKR) is disordered. Residues 124–133 (KAAAPAPAKK) show a composition bias toward low complexity.

This sequence belongs to the eukaryotic ribosomal protein eL24 family.

This Drosophila melanogaster (Fruit fly) protein is Large ribosomal subunit protein eL24 (RpL24).